Reading from the N-terminus, the 149-residue chain is Deoxyuridine 5'-triphosphate nucleotidohydrolase (149 aa).

Residues 68–70 (RSG), asparagine 81, 85–87 (LID), and methionine 95 contribute to the substrate site.

Belongs to the dUTPase family. Mg(2+) serves as cofactor.

It catalyses the reaction dUTP + H2O = dUMP + diphosphate + H(+). Its pathway is pyrimidine metabolism; dUMP biosynthesis; dUMP from dCTP (dUTP route): step 2/2. In terms of biological role, this enzyme is involved in nucleotide metabolism: it produces dUMP, the immediate precursor of thymidine nucleotides and it decreases the intracellular concentration of dUTP so that uracil cannot be incorporated into DNA. The protein is Deoxyuridine 5'-triphosphate nucleotidohydrolase of Albidiferax ferrireducens (strain ATCC BAA-621 / DSM 15236 / T118) (Rhodoferax ferrireducens).